Reading from the N-terminus, the 263-residue chain is Glucosamine-6-phosphate deaminase (263 aa).

Aspartate 67 (proton acceptor; for enolization step) is an active-site residue. The For ring-opening step role is filled by asparagine 136. Histidine 138 functions as the Proton acceptor; for ring-opening step in the catalytic mechanism. The active-site For ring-opening step is glutamate 143.

Belongs to the glucosamine/galactosamine-6-phosphate isomerase family. NagB subfamily. In terms of assembly, homohexamer.

It carries out the reaction alpha-D-glucosamine 6-phosphate + H2O = beta-D-fructose 6-phosphate + NH4(+). The protein operates within amino-sugar metabolism; N-acetylneuraminate degradation; D-fructose 6-phosphate from N-acetylneuraminate: step 5/5. In terms of biological role, catalyzes the reversible isomerization-deamination of glucosamine 6-phosphate (GlcN6P) to form fructose 6-phosphate (Fru6P) and ammonium ion. This Shewanella halifaxensis (strain HAW-EB4) protein is Glucosamine-6-phosphate deaminase.